The sequence spans 501 residues: E3 ubiquitin-protein ligase TRIM35 (501 aa).

The residue at position 1 (Met1) is an N-acetylmethionine. A Phosphoserine modification is found at Ser8. The segment at 21–61 (CAVCYDPFRDAVTLRCGHNFCRRCVSGCWEVQTTPSCPVCK) adopts an RING-type zinc-finger fold. Residues 96-137 (RSPRPCRAHRAPLTLFCVEDKELLCCACQADARHQEHRVQPI) form a B box-type zinc finger. Zn(2+)-binding residues include Cys101, His104, Cys123, and His129. A coiled-coil region spans residues 209-252 (MKEESRKKHLLAEEKMKQLAEQTEALAREIERLQMEMKEDDMTF). The B30.2/SPRY domain occupies 284–495 (LESLQYRVWK…LRICHLRVSI (212 aa)).

As to quaternary structure, interacts with PKM isoform M2, but not isoform M1; this interaction may compete with that between PKM and FGFR1, and hence reduces FGFR1-dependent tyrosine phosphorylation of PKM. Interacts with IRF7; this interaction promotes IRF7 proteasomal degradation. Interacts with TRAF3; this interaction promotes TRAF3 activation.

It localises to the cytoplasm. The protein resides in the nucleus. It catalyses the reaction S-ubiquitinyl-[E2 ubiquitin-conjugating enzyme]-L-cysteine + [acceptor protein]-L-lysine = [E2 ubiquitin-conjugating enzyme]-L-cysteine + N(6)-ubiquitinyl-[acceptor protein]-L-lysine.. It participates in protein modification; protein ubiquitination. E3 ubiquitin-protein ligase that participates in multiple biological processes including cell death, glucose metabolism, and in particular, the innate immune response. Mediates 'Lys-63'-linked polyubiquitination of TRAF3 thereby promoting type I interferon production via RIG-I signaling pathway. Can also catalyze 'Lys-48'-linked polyubiquitination and proteasomal degradation of viral proteins such as influenza virus PB2. Acts as a negative feedback regulator of TLR7- and TLR9-triggered signaling. Mechanistically, promotes the 'Lys-48'-linked ubiquitination of IRF7 and induces its degradation via a proteasome-dependent pathway. Reduces FGFR1-dependent tyrosine phosphorylation of PKM, inhibiting PKM-dependent lactate production, glucose metabolism, and cell growth. The protein is E3 ubiquitin-protein ligase TRIM35 (Trim35) of Rattus norvegicus (Rat).